A 624-amino-acid chain; its full sequence is Plastin-2 (624 aa).

EF-hand domains are found at residues 9 to 44 (EEME…ANLP) and 49 to 84 (RVRE…LKSS). 10 residues coordinate Ca(2+): aspartate 22, aspartate 24, asparagine 26, histidine 28, glutamate 33, aspartate 62, asparagine 64, aspartate 66, lysine 68, and glutamate 73. 4 consecutive Calponin-homology (CH) domains span residues 118–234 (EEEK…KIGL), 262–373 (LSPE…NKYP), 392–501 (TREE…RRYT), and 513–621 (KIID…ARGM). Actin-binding regions lie at residues 118–373 (EEEK…NKYP) and 392–621 (TREE…ARGM).

In terms of assembly, monomer. In terms of tissue distribution, expressed by macrophages (at protein level).

The protein localises to the cytoplasm. The protein resides in the cytoskeleton. It is found in the cell junction. It localises to the cell projection. Its subcellular location is the ruffle membrane. Its function is as follows. Actin-binding protein. Plays a role in the activation of T-cells. This is Plastin-2 from Danio rerio (Zebrafish).